Reading from the N-terminus, the 266-residue chain is Nickel import ATP-binding protein NikE (266 aa).

The ABC transporter domain maps to 4 to 252 (ISADNIVKIY…RHPASRLLRE (249 aa)). 45 to 52 (GRSGCGKS) contacts ATP.

The protein belongs to the ABC transporter superfamily. Nickel importer (TC 3.A.1.5.3) family. As to quaternary structure, the complex is composed of two ATP-binding proteins (NikD and NikE), two transmembrane proteins (NikB and NikC) and a solute-binding protein (NikA).

The protein resides in the cell inner membrane. The catalysed reaction is Ni(2+)(out) + ATP + H2O = Ni(2+)(in) + ADP + phosphate + H(+). In terms of biological role, part of the ABC transporter complex NikABCDE involved in nickel import. Responsible for energy coupling to the transport system. The chain is Nickel import ATP-binding protein NikE from Brucella abortus (strain 2308).